Here is a 638-residue protein sequence, read N- to C-terminus: Sorting nexin-41 (638 aa).

Positions 1–14 are enriched in low complexity; that stretch reads MDSDTSPNPFASSP. Residues 1-69 are disordered; sequence MDSDTSPNPF…MGATVPGPKP (69 aa). Over residues 15-30 the composition is skewed to pro residues; the sequence is PSSPSPRPSLPPPVPR. The PX domain occupies 84–201; it reads GEQVHIVDAL…HRFLEEDVSW (118 aa). Residues arginine 118, serine 120, lysine 144, and arginine 168 each coordinate a 1,2-diacyl-sn-glycero-3-phospho-(1D-myo-inositol-3-phosphate). 3 disordered regions span residues 215-239, 408-432, and 545-638; these read KNPL…SEAP, LERG…RERA, and PHPN…LGPL. A compositionally biased stretch (low complexity) spans 225–239; it reads PTFQPTTPTSPSEAP. The span at 423 to 432 shows a compositional bias: basic and acidic residues; that stretch reads EAARDERERA. The span at 552–562 shows a compositional bias: low complexity; sequence QTQTQVQSQQS. The span at 585 to 601 shows a compositional bias: basic and acidic residues; the sequence is MKNEIERVEIEIADKPL.

This sequence belongs to the sorting nexin family.

It localises to the endosome membrane. It is found in the endomembrane system. Its function is as follows. May be required for cytoplasm to vacuole transport (Cvt) and pexophagy. This chain is Sorting nexin-41 (SNX41), found in Cryptococcus neoformans var. neoformans serotype D (strain B-3501A) (Filobasidiella neoformans).